Reading from the N-terminus, the 215-residue chain is Ribonuclease T (215 aa).

An Exonuclease domain is found at 20–194; that stretch reads VVIDVETAGF…YDTLQTAKLF (175 aa). Positions 23, 25, 181, and 186 each coordinate Mg(2+). His181 functions as the Proton donor/acceptor in the catalytic mechanism.

Belongs to the RNase T family. Homodimer. It depends on Mg(2+) as a cofactor.

Trims short 3' overhangs of a variety of RNA species, leaving a one or two nucleotide 3' overhang. Responsible for the end-turnover of tRNA: specifically removes the terminal AMP residue from uncharged tRNA (tRNA-C-C-A). Also appears to be involved in tRNA biosynthesis. This is Ribonuclease T from Yersinia pseudotuberculosis serotype O:1b (strain IP 31758).